Reading from the N-terminus, the 346-residue chain is N(4)-(beta-N-acetylglucosaminyl)-L-asparaginase (346 aa).

Positions 1–23 are cleaved as a signal peptide; it reads MARKSNLPVLLVPFLLCQALVRC. Ser-24 is modified (blocked amino end (Ser)). Asn-38 carries an N-linked (GlcNAc...) asparagine glycan. 2 cysteine pairs are disulfide-bonded: Cys-64/Cys-69 and Cys-163/Cys-179. Thr-206 serves as the catalytic Nucleophile. Residues 234-237 and 257-260 each bind substrate; these read RVGD and TGNG. Residues Cys-286 and Cys-306 are joined by a disulfide bond. N-linked (GlcNAc...) asparagine glycosylation occurs at Asn-308. A disulfide bridge connects residues Cys-317 and Cys-345.

The protein belongs to the Ntn-hydrolase family. As to quaternary structure, heterotetramer of two alpha and two beta chains arranged as a dimer of alpha/beta heterodimers. Post-translationally, cleaved into an alpha and beta chain by autocatalysis; this activates the enzyme. The N-terminal residue of the beta subunit is responsible for the nucleophile hydrolase activity. In terms of processing, N-glycosylated.

The protein localises to the lysosome. It carries out the reaction N(4)-(beta-N-acetyl-D-glucosaminyl)-L-asparagine + H2O = N-acetyl-beta-D-glucosaminylamine + L-aspartate + H(+). Functionally, cleaves the GlcNAc-Asn bond which joins oligosaccharides to the peptide of asparagine-linked glycoproteins. The sequence is that of N(4)-(beta-N-acetylglucosaminyl)-L-asparaginase (AGA) from Homo sapiens (Human).